We begin with the raw amino-acid sequence, 498 residues long: Protein MGF 505-5R (498 aa).

The protein belongs to the asfivirus MGF 505 family.

Plays a role in virus cell tropism, and may be required for efficient virus replication in macrophages. The polypeptide is Protein MGF 505-5R (African swine fever virus (strain Badajoz 1971 Vero-adapted) (Ba71V)).